A 213-amino-acid polypeptide reads, in one-letter code: Probable septum site-determining protein MinC (213 aa).

The protein belongs to the MinC family. Interacts with MinD and FtsZ.

Cell division inhibitor that blocks the formation of polar Z ring septums. Rapidly oscillates between the poles of the cell to destabilize FtsZ filaments that have formed before they mature into polar Z rings. Prevents FtsZ polymerization. The chain is Probable septum site-determining protein MinC from Pseudothermotoga lettingae (strain ATCC BAA-301 / DSM 14385 / NBRC 107922 / TMO) (Thermotoga lettingae).